The following is a 498-amino-acid chain: N-succinylglutamate 5-semialdehyde dehydrogenase 1 (498 aa).

231–236 (GSSNTG) serves as a coordination point for NAD(+). Residues Glu-254 and Cys-288 contribute to the active site.

Belongs to the aldehyde dehydrogenase family. AstD subfamily.

The enzyme catalyses N-succinyl-L-glutamate 5-semialdehyde + NAD(+) + H2O = N-succinyl-L-glutamate + NADH + 2 H(+). It functions in the pathway amino-acid degradation; L-arginine degradation via AST pathway; L-glutamate and succinate from L-arginine: step 4/5. In terms of biological role, catalyzes the NAD-dependent reduction of succinylglutamate semialdehyde into succinylglutamate. The chain is N-succinylglutamate 5-semialdehyde dehydrogenase 1 from Shewanella denitrificans (strain OS217 / ATCC BAA-1090 / DSM 15013).